We begin with the raw amino-acid sequence, 533 residues long: Flavin-containing monooxygenase 5 (533 aa).

Arg5 bears the Dimethylated arginine mark. FAD is bound by residues 10–14 (GAGAS), Glu33, and 41–42 (LW). The residue at position 54 (Ser54) is a Phosphoserine. Tyr56 carries the post-translational modification Phosphotyrosine. Position 58 is a phosphoserine (Ser58). An FAD-binding site is contributed by 62–63 (NT). 196–199 (SGGD) lines the NADP(+) pocket. Ser280 carries the post-translational modification Phosphoserine. The residue at position 284 (Thr284) is a Phosphothreonine. Ser401 carries the phosphoserine modification. Residues 513 to 533 (LVTVRVLMLAVAFFAVILAYF) traverse the membrane as a helical segment.

It belongs to the FMO family. FAD is required as a cofactor. In terms of tissue distribution, expressed in liver (at protein level). Expressed in the mucosal epithelium of the gastrointestinal tract.

It localises to the microsome membrane. Its subcellular location is the endoplasmic reticulum membrane. The enzyme catalyses N,N-dimethylaniline + NADPH + O2 + H(+) = N,N-dimethylaniline N-oxide + NADP(+) + H2O. The catalysed reaction is NADPH + O2 + H(+) = H2O2 + NADP(+). It catalyses the reaction heptan-2-one + NADPH + O2 + H(+) = pentyl acetate + NADP(+) + H2O. It carries out the reaction octan-3-one + NADPH + O2 + H(+) = pentyl propanoate + NADP(+) + H2O. The enzyme catalyses octan-3-one + NADPH + O2 + H(+) = ethyl hexanoate + NADP(+) + H2O. The catalysed reaction is hexan-3-one + NADPH + O2 + H(+) = ethyl butanoate + NADP(+) + H2O. It catalyses the reaction hexan-3-one + NADPH + O2 + H(+) = propyl propanoate + NADP(+) + H2O. It carries out the reaction heptan-4-one + NADPH + O2 + H(+) = propyl butanoate + NADP(+) + H2O. The enzyme catalyses (2E)-geranial + NADPH + O2 + H(+) = (1E)-2,6-dimethylhepta-1,5-dien-1-yl formate + NADP(+) + H2O. The catalysed reaction is sulcatone + NADPH + O2 + H(+) = 4-methylpent-3-en-1-yl acetate + NADP(+) + H2O. Functionally, acts as a Baeyer-Villiger monooxygenase on a broad range of substrates. Catalyzes the insertion of an oxygen atom into a carbon-carbon bond adjacent to a carbonyl, which converts ketones to esters. Active on diverse carbonyl compounds, whereas soft nucleophiles are mostly non- or poorly reactive. In contrast with other forms of FMO it is non- or poorly active on 'classical' substrates such as drugs, pesticides, and dietary components containing soft nucleophilic heteroatoms. Able to oxidize drug molecules bearing a carbonyl group on an aliphatic chain, such as nabumetone and pentoxifylline. Also, in the absence of substrates, shows slow but yet significant NADPH oxidase activity. Acts as a positive modulator of cholesterol biosynthesis as well as glucose homeostasis, promoting metabolic aging via pleiotropic effects. This is Flavin-containing monooxygenase 5 from Mus musculus (Mouse).